Consider the following 727-residue polypeptide: BRCA1-A complex subunit RAP80 (727 aa).

The tract at residues 1–23 is disordered; that stretch reads MPRRKKKIKEASESQNLEKKDLE. Residues 1–101 form a necessary for transcriptional repression region; it reads MPRRKKKIKE…SEQEAREVNN (101 aa). Residues 9–23 are compositionally biased toward basic and acidic residues; it reads KEASESQNLEKKDLE. Lys-20 participates in a covalent cross-link: Glycyl lysine isopeptide (Lys-Gly) (interchain with G-Cter in SUMO2). Ser-29 is modified (phosphoserine). A Glycyl lysine isopeptide (Lys-Gly) (interchain with G-Cter in SUMO2) cross-link involves residue Lys-31. A phosphoserine mark is found at Ser-44 and Ser-46. The disordered stretch occupies residues 45-70; the sequence is DSDGEETKEENGLQKTKTKQSNRSKC. At Thr-51 the chain carries Phosphothreonine. The segment covering 60–70 has biased composition (basic residues); sequence TKTKQSNRSKC. The short motif at 60–78 is the LR motif element; sequence TKTKQSNRSKCLAKRKVAH. Glycyl lysine isopeptide (Lys-Gly) (interchain with G-Cter in SUMO2) cross-links involve residues Lys-75 and Lys-90. UIM domains are found at residues 80–99 and 104–124; these read SEEEQFALALKMSEQEAREV and EKEEELLRKAIAESLNSCWSS. The UIM-linker stretch occupies residues 97-103; the sequence is REVNNQE. A necessary for interaction with NR6A1 N-terminus region spans residues 100-200; the sequence is NNQEEKEEEL…EEPVSGSSGS (101 aa). Residues 133-206 form a disordered region; the sequence is PLAAELSSHS…SSGSWDQSSQ (74 aa). At Ser-140 the chain carries Phosphoserine. The segment covering 176 to 188 has biased composition (basic and acidic residues); that stretch reads AEQRKEPWDHNEN. Positions 195 to 206 are enriched in low complexity; the sequence is SGSSGSWDQSSQ. The residue at position 205 (Ser-205) is a Phosphoserine. Lys-245 participates in a covalent cross-link: Glycyl lysine isopeptide (Lys-Gly) (interchain with G-Cter in SUMO2). Residues 270-400 are AIR; the sequence is TGGTVHYYWG…EEEPTTSRGQ (131 aa). The interval 326 to 427 is disordered; sequence PRPPFLIQNE…SEGDNSVPTT (102 aa). The segment covering 355 to 364 has biased composition (basic and acidic residues); that stretch reads DEAKEERQES. Position 379 is a phosphoserine (Ser-379). Residues Lys-382 and Lys-387 each participate in a glycyl lysine isopeptide (Lys-Gly) (interchain with G-Cter in SUMO2) cross-link. The tract at residues 400–508 is necessary for interaction with NR6A1 C-terminus; sequence QSSQGLFVEE…ENPPPAVSSS (109 aa). At Ser-402 the chain carries Phosphoserine. Residue Lys-436 forms a Glycyl lysine isopeptide (Lys-Gly) (interchain with G-Cter in SUMO2) linkage. Ser-474 bears the Phosphoserine mark. A UBZ4-type zinc finger spans residues 510-537; it reads RVSCPLCNQDFPPTKIEQHAMYCNGLME. Residues Cys-513, Cys-516, His-528, and Cys-532 each coordinate Zn(2+). The zinc-finger-like region stretch occupies residues 513–590; it reads CPLCNQDFPP…GEYQCHVEAC (78 aa). Glycyl lysine isopeptide (Lys-Gly) (interchain with G-Cter in SUMO2) cross-links involve residues Lys-552, Lys-570, Lys-595, and Lys-617. The interval 607–654 is disordered; sequence RPRVCAPVEGKQQQRLKKSKDKGHSQGRLLSLLEQSEHRTTGVEKKPK. A Phosphoserine modification is found at Ser-637. Residues 641–654 are compositionally biased toward basic and acidic residues; the sequence is QSEHRTTGVEKKPK. Residue Lys-652 forms a Glycyl lysine isopeptide (Lys-Gly) (interchain with G-Cter in SUMO2) linkage. Phosphoserine is present on residues Ser-665 and Ser-689. Lys-708 participates in a covalent cross-link: Glycyl lysine isopeptide (Lys-Gly) (interchain with G-Cter in SUMO2).

It belongs to the RAP80 family. As to quaternary structure, component of the ARISC complex, at least composed of UIMC1/RAP80, ABRAXAS1, BRCC3/BRCC36, BABAM2 and BABAM1/NBA1. Component of the BRCA1-A complex, at least composed of the BRCA1, BARD1, UIMC1/RAP80, ABRAXAS1, BRCC3/BRCC36, BABAM2 and BABAM1/NBA1. In the BRCA1-A complex, interacts directly with ABRAXAS1. Interacts with ESR1. Interacts with UBE2I. Interacts with NR6A1. Interacts with TSP57. Interacts with TRAIP. Sumoylated. In terms of processing, phosphorylated upon DNA damage by ATM or ATR.

Its subcellular location is the nucleus. In terms of biological role, ubiquitin-binding protein. Specifically recognizes and binds 'Lys-63'-linked ubiquitin. Plays a central role in the BRCA1-A complex by specifically binding 'Lys-63'-linked ubiquitinated histones H2A and H2AX at DNA lesions sites, leading to target the BRCA1-BARD1 heterodimer to sites of DNA damage at double-strand breaks (DSBs). The BRCA1-A complex also possesses deubiquitinase activity that specifically removes 'Lys-63'-linked ubiquitin on histones H2A and H2AX. Also weakly binds monoubiquitin but with much less affinity than 'Lys-63'-linked ubiquitin. May interact with monoubiquitinated histones H2A and H2B; the relevance of such results is however unclear in vivo. Does not bind Lys-48'-linked ubiquitin. May indirectly act as a transcriptional repressor by inhibiting the interaction of NR6A1 with the corepressor NCOR1. This Mus musculus (Mouse) protein is BRCA1-A complex subunit RAP80 (Uimc1).